The following is a 90-amino-acid chain: MARKLDMDKGAIISEYGLSKGDTGSPEVQIALLTARIARLTQHLKEHSFDHHSRRGLMLMVGRRRRLLSYLHGVDVSRYRAILSNLGLRR.

It belongs to the universal ribosomal protein uS15 family. In terms of assembly, part of the 30S ribosomal subunit. Forms a bridge to the 50S subunit in the 70S ribosome, contacting the 23S rRNA.

In terms of biological role, one of the primary rRNA binding proteins, it binds directly to 16S rRNA where it helps nucleate assembly of the platform of the 30S subunit by binding and bridging several RNA helices of the 16S rRNA. Its function is as follows. Forms an intersubunit bridge (bridge B4) with the 23S rRNA of the 50S subunit in the ribosome. This is Small ribosomal subunit protein uS15 from Tropheryma whipplei (strain TW08/27) (Whipple's bacillus).